Consider the following 872-residue polypeptide: DNA polymerase 1 (872 aa).

This sequence belongs to the DNA polymerase type-B family.

The catalysed reaction is DNA(n) + a 2'-deoxyribonucleoside 5'-triphosphate = DNA(n+1) + diphosphate. In Sulfurisphaera ohwakuensis, this protein is DNA polymerase 1 (pol-alpha).